Reading from the N-terminus, the 345-residue chain is Protein CHROMOSOME TRANSMISSION FIDELITY 7 (345 aa).

The segment at Arg-96–His-120 adopts a CCHH-type zinc-finger fold.

Belongs to the acetyltransferase family. ECO subfamily. Post-translationally, autoacetylated. Expressed in roots, stems, leaves, young seedlings and flower buds. Detected in the embryo, but not in the endosperm.

The protein localises to the nucleus. It is found in the cytoplasm. Acetyltransferase required for the establishment of sister chromatid cohesion. Involved in preservation of genome integrity and meiosis. Required for DNA repair and for the regulation of chromosome segregation during mitotic cell division. Knock-down mutants are extremely dwarf. Regulator of sister chromatid cohesion in meiosis which negatively regulates cohesin association with chromatin, acting as an antagonist of WAPL1 and WAPL2. The chain is Protein CHROMOSOME TRANSMISSION FIDELITY 7 from Arabidopsis thaliana (Mouse-ear cress).